The sequence spans 717 residues: Radial spoke head protein 6 homolog A (717 aa).

Disordered stretches follow at residues 1-65 (MGDL…SLSQ), 503-523 (SEEE…YEEN), 563-588 (TEEE…QEVG), and 672-717 (GPEI…ETDD). Acidic residues-rich tracts occupy residues 503-513 (SEEEGDEEEEG), 564-585 (EEEE…EVEQ), and 700-717 (TEEE…ETDD).

This sequence belongs to the flagellar radial spoke RSP4/6 family. As to quaternary structure, component of the axonemal radial spoke 1 (RS1) and 2 (RS2) complexes, at least composed of spoke head proteins RSPH1, RSPH3, RSPH9 and the cilia-specific component RSPH4A or sperm-specific component RSPH6A, spoke stalk proteins RSPH14, DNAJB13, DYDC1, ROPN1L and NME5, and the RS1 complex-specific anchor protein IQUB. Interacts with RSPH1. Interacts with RSPH3B. Interacts with RSPH4A. Interacts with RSPH9. Interacts with RSPH10B. In terms of processing, phosphorylated by PKA. Phosphorylation increases in capacitated sperm.

It is found in the cytoplasm. The protein localises to the cytoskeleton. Its subcellular location is the flagellum axoneme. Functions as part of radial spoke complexes in the axoneme of sperm flagella that play an important part in motility. The triple radial spokes (RS1, RS2 and RS3) are required to modulate beating of the sperm flagellum. The sequence is that of Radial spoke head protein 6 homolog A from Homo sapiens (Human).